The primary structure comprises 381 residues: Putative 8-amino-7-oxononanoate synthase (381 aa).

Arginine 22 is a binding site for substrate. 109 to 110 contacts pyridoxal 5'-phosphate; that stretch reads GF. Histidine 134 is a binding site for substrate. Residues serine 182, 207–210, and 233–236 contribute to the pyridoxal 5'-phosphate site; these read DDAH and TLSK. Lysine 236 carries the N6-(pyridoxal phosphate)lysine modification. Position 345 (threonine 345) interacts with substrate.

This sequence belongs to the class-II pyridoxal-phosphate-dependent aminotransferase family. BioF subfamily. In terms of assembly, homodimer. Pyridoxal 5'-phosphate is required as a cofactor.

The catalysed reaction is 6-carboxyhexanoyl-[ACP] + L-alanine + H(+) = (8S)-8-amino-7-oxononanoate + holo-[ACP] + CO2. Its pathway is cofactor biosynthesis; biotin biosynthesis. Functionally, catalyzes the decarboxylative condensation of pimeloyl-[acyl-carrier protein] and L-alanine to produce 8-amino-7-oxononanoate (AON), [acyl-carrier protein], and carbon dioxide. The protein is Putative 8-amino-7-oxononanoate synthase (bioF) of Acidiphilium cryptum (strain JF-5).